Reading from the N-terminus, the 248-residue chain is Exosome complex component Rrp41 (248 aa).

It belongs to the RNase PH family. Rrp41 subfamily. As to quaternary structure, component of the archaeal exosome complex. Forms a hexameric ring-like arrangement composed of 3 Rrp41-Rrp42 heterodimers. The hexameric ring associates with a trimer of Rrp4 and/or Csl4 subunits.

The protein resides in the cytoplasm. In terms of biological role, catalytic component of the exosome, which is a complex involved in RNA degradation. Has 3'-&gt;5' exoribonuclease activity. Can also synthesize heteromeric RNA-tails. The polypeptide is Exosome complex component Rrp41 (Thermoplasma acidophilum (strain ATCC 25905 / DSM 1728 / JCM 9062 / NBRC 15155 / AMRC-C165)).